We begin with the raw amino-acid sequence, 234 residues long: Large ribosomal subunit protein uL1 (234 aa).

The protein belongs to the universal ribosomal protein uL1 family. Part of the 50S ribosomal subunit.

Binds directly to 23S rRNA. The L1 stalk is quite mobile in the ribosome, and is involved in E site tRNA release. Its function is as follows. Protein L1 is also a translational repressor protein, it controls the translation of the L11 operon by binding to its mRNA. The polypeptide is Large ribosomal subunit protein uL1 (Tolumonas auensis (strain DSM 9187 / NBRC 110442 / TA 4)).